We begin with the raw amino-acid sequence, 217 residues long: MGRNKKKKKRDGDDRRPRLVLNFDEEKRREYLTGFHKRKVERKKAAIEEIKQRLKQEQKKLREERHQEYLKMLAEREEALEEADELERLVTAKTESVQYDHPNHTVTVTTISDLDLSGARLLGLPLPEQGDQDGSQEEEMSSLEKPTKALPRKSKDPLLSQRISSLTATLHAHSRKKVKRKHPRRAQDSTKKPPSATRTSKTQRRRRMTGKARHNGE.

Positions 34–98 (GFHKRKVERK…LVTAKTESVQ (65 aa)) form a coiled coil. Positions 122 to 217 (LGLPLPEQGD…MTGKARHNGE (96 aa)) are disordered. Positions 130 to 141 (GDQDGSQEEEMS) are enriched in acidic residues. 2 stretches are compositionally biased toward basic residues: residues 172-184 (AHSRKKVKRKHPR) and 201-217 (KTQRRRRMTGKARHNGE).

It belongs to the RRP17 family. In terms of assembly, interacts with KIAA1191. In terms of tissue distribution, expressed in brain, lung, spleen, kidney and heart.

It is found in the nucleus. It localises to the nucleolus. The protein resides in the cytoplasm. In terms of biological role, multifunctional RNA binding protein that plays a role in RNA metabolism and DNA maintenance. Participates in the resolution of DNA stress and the maintenance of genome integrity by localizing to sites of DNA insults. Also plays a role in proper nucleolar organization by limiting nucleolar size and regulating nucleolar number. Mechanistically, regulates the nucleolar levels of fibrillarin and nucleolin, two key players in pre-rRNA processing and ribosome assembly. This Mus musculus (Mouse) protein is Nucleolar protein 12 (Nol12).